A 170-amino-acid chain; its full sequence is Ribosome maturation factor RimP (170 aa).

The protein belongs to the RimP family.

It is found in the cytoplasm. Required for maturation of 30S ribosomal subunits. This chain is Ribosome maturation factor RimP, found in Chlorobaculum parvum (strain DSM 263 / NCIMB 8327) (Chlorobium vibrioforme subsp. thiosulfatophilum).